Reading from the N-terminus, the 165-residue chain is MSLPEKAFPVSWDQFHRDARALAWRLAGTNGRWQAIVCITRGGLVPAAVIARELGIRLIETVCIASYHDYSEQGELKVLKEISPSLLEEDGQNILIVDDLTDTGKTAAIVRAMMPKAHFATVYAKPKGRPLVDTFVTEVSQDTWIYFPWDLGFSYQKPIADGEIG.

5-phospho-alpha-D-ribose 1-diphosphate-binding positions include Arg41–Gly42 and Asp98–Thr106. Asp99 is a binding site for Mg(2+). 2 residues coordinate guanine: Asp102 and Ile145. 2 residues coordinate xanthine: Asp102 and Ile145. GMP contacts are provided by residues Asp102 to Thr106 and Trp144 to Ile145.

Belongs to the purine/pyrimidine phosphoribosyltransferase family. XGPT subfamily. As to quaternary structure, homotetramer. Requires Mg(2+) as cofactor.

The protein resides in the cell inner membrane. It catalyses the reaction GMP + diphosphate = guanine + 5-phospho-alpha-D-ribose 1-diphosphate. The catalysed reaction is XMP + diphosphate = xanthine + 5-phospho-alpha-D-ribose 1-diphosphate. The enzyme catalyses IMP + diphosphate = hypoxanthine + 5-phospho-alpha-D-ribose 1-diphosphate. Its pathway is purine metabolism; GMP biosynthesis via salvage pathway; GMP from guanine: step 1/1. It participates in purine metabolism; XMP biosynthesis via salvage pathway; XMP from xanthine: step 1/1. Functionally, purine salvage pathway enzyme that catalyzes the transfer of the ribosyl-5-phosphate group from 5-phospho-alpha-D-ribose 1-diphosphate (PRPP) to the N9 position of the 6-oxopurines guanine and xanthine to form the corresponding ribonucleotides GMP (guanosine 5'-monophosphate) and XMP (xanthosine 5'-monophosphate), with the release of PPi. To a lesser extent, also acts on hypoxanthine. This is Xanthine-guanine phosphoribosyltransferase from Chelativorans sp. (strain BNC1).